A 937-amino-acid polypeptide reads, in one-letter code: Scaffold attachment factor B1 (937 aa).

Positions 1-35 are disordered; sequence MAETLSGLGDASAAGAAAVSSAASETGTRRLSDLR. Position 2 is an N-acetylalanine (Ala2). Over residues 11–24 the composition is skewed to low complexity; the sequence is ASAAGAAAVSSAAS. 2 positions are modified to phosphoserine: Ser24 and Ser55. Residues 31-65 enclose the SAP domain; sequence LSDLRVIDLRAELKKRNLDSSGNKSVLMERLKKAI. The disordered stretch occupies residues 64–117; it reads AIEDEGGNPDEIEVTSECNKKMPKRPSKGRKPEDEGVEDNGLEENSGDGQEDVE. Acidic residues predominate over residues 67–77; sequence DEGGNPDEIEV. Phosphoserine is present on Ser79. Over residues 98–117 the composition is skewed to acidic residues; sequence EGVEDNGLEENSGDGQEDVE. Glycyl lysine isopeptide (Lys-Gly) (interchain with G-Cter in SUMO2) cross-links involve residues Lys172 and Lys186. Thr188 is subject to Phosphothreonine. 3 positions are modified to phosphoserine: Ser195, Ser197, and Ser209. The tract at residues 222 to 429 is disordered; it reads GETCKSEPVK…EKGRSSCGRN (208 aa). Positions 225–234 are enriched in basic and acidic residues; the sequence is CKSEPVKEEG. A Glycyl lysine isopeptide (Lys-Gly) (interchain with G-Cter in SUMO) cross-link involves residue Lys231. The segment covering 268–287 has biased composition (acidic residues); the sequence is EEEEEEEEEDQEEEQEEEGD. Residue Lys316 forms a Glycyl lysine isopeptide (Lys-Gly) (interchain with G-Cter in SUMO) linkage. A compositionally biased stretch (polar residues) spans 341-356; the sequence is EQSSTAAQLPEATSQE. Positions 370–380 are enriched in basic and acidic residues; it reads QDSKEDVKKFA. Residue Lys403 forms a Glycyl lysine isopeptide (Lys-Gly) (interchain with G-Cter in SUMO2) linkage. Phosphoserine occurs at positions 405 and 406. Positions 412 to 423 are enriched in basic and acidic residues; it reads DTKRLSREEKGR. Lys414 participates in a covalent cross-link: Glycyl lysine isopeptide (Lys-Gly) (interchain with G-Cter in SUMO2). Residues 428–506 form the RRM domain; that stretch reads RNFWVSGLSS…KMISVEKAKS (79 aa). At Ser437 the chain carries Phosphoserine. Basic and acidic residues-rich tracts occupy residues 499–573 and 581–592; these read ISVE…ERSR and GTERTVVMDKSK. Disordered regions lie at residues 499–661, 684–738, and 771–937; these read ISVE…WERE, RMER…YEVD, and FDHR…TRRY. Glycyl lysine isopeptide (Lys-Gly) (interchain with G-Cter in SUMO2) cross-links involve residues Lys505, Lys536, Lys565, and Lys592. Residues 550–814 are interaction with POLR2A; SFRS1; SFRS9 and SFRS10; sequence TDDGSTEKSK…RHGGPERHGR (265 aa). Residue Lys600 forms a Glycyl lysine isopeptide (Lys-Gly) (interchain with G-Cter in SUMO1); alternate linkage. Lys600 is covalently cross-linked (Glycyl lysine isopeptide (Lys-Gly) (interchain with G-Cter in SUMO2); alternate). Ser602, Ser604, Ser623, and Ser626 each carry phosphoserine. Basic and acidic residues predominate over residues 603–661; it reads GSKERASKSQDRKSASREKRSVVSFDKVKESRKSRDSESRRERERSEREQRLQAQWERE. The Nuclear localization signal signature appears at 621-638; sequence KRSVVSFDKVKESRKSRD. An interaction with SAFB2 region spans residues 621–937; that stretch reads KRSVVSFDKV…PSDARFTRRY (317 aa). The residue at position 629 (Lys629) is an N6-acetyllysine. A coiled-coil region spans residues 652-726; sequence QRLQAQWERE…RQQELRYEQE (75 aa). The segment covering 771–818 has biased composition (basic and acidic residues); that stretch reads FDHRDRGRYPNHSVDRREGSRSMMGDREGQHYPERHGGPERHGRDSRD. Arg832 bears the Omega-N-methylarginine mark. 2 stretches are compositionally biased toward basic and acidic residues: residues 838-854 and 863-873; these read PRRDWGEHGRRLEDDRA and MMERDHKRWQG. Lys869 is covalently cross-linked (Glycyl lysine isopeptide (Lys-Gly) (interchain with G-Cter in SUMO2)). Arg890, Arg896, Arg906, and Arg912 each carry asymmetric dimethylarginine. Basic and acidic residues predominate over residues 927–937; it reads RPSDARFTRRY.

Monomer and homodimer. Forms heterodimers with SAFB2. Interacts with KHDRBS3. Interacts with CLK2. Interacts with POLR2A, ASF/SRSF1, SRp30c/SRFS9 and TRA2B/SFRS10. Interacts with SRPK1 and inhibits its activity. Interacts with RBMX. Interacts with FUS. Interacts with ZBED4. Sumoylated by PIAS1 with SUMO1 and SUMO2/3, desumoylated by SENP1. Sumoylation is required for transcriptional repressor activity.

Its subcellular location is the nucleus. In terms of biological role, binds to scaffold/matrix attachment region (S/MAR) DNA and forms a molecular assembly point to allow the formation of a 'transcriptosomal' complex (consisting of SR proteins and RNA polymerase II) coupling transcription and RNA processing. Functions as an estrogen receptor corepressor and can also bind to the HSP27 promoter and decrease its transcription. Thereby acts as a negative regulator of cell proliferation. When associated with RBMX, binds to and stimulates transcription from the SREBF1 promoter. The polypeptide is Scaffold attachment factor B1 (Safb) (Mus musculus (Mouse)).